The primary structure comprises 118 residues: uncharacterized protein (118 aa).

This is an uncharacterized protein from Rickettsia prowazekii (strain Madrid E).